The primary structure comprises 168 residues: uncharacterized protein (168 aa).

4Fe-4S ferredoxin-type domains are found at residues 48–78 (KIPK…MIPI) and 91–122 (KIPK…ISPI). Residues C58, C61, C64, C68, C100, C103, C106, and C110 each coordinate [4Fe-4S] cluster.

This is an uncharacterized protein from Methanocaldococcus jannaschii (strain ATCC 43067 / DSM 2661 / JAL-1 / JCM 10045 / NBRC 100440) (Methanococcus jannaschii).